A 485-amino-acid chain; its full sequence is GTPase Der (485 aa).

2 consecutive EngA-type G domains span residues 3 to 167 and 176 to 349; these read PTIA…PEPE and PVFA…NAAM. Residues 9–16, 56–60, 119–122, 182–189, 229–233, and 294–297 each bind GTP; these read GRPNVGKS, DTGGF, NKGE, DTAGV, and NKWD. In terms of domain architecture, KH-like spans 350 to 434; sequence IKMPTPKITR…PLRIQYNVSE (85 aa). Residues 435–485 form a disordered region; it reads NPYENADDKPKKKPLRRVSLSNRIEKREGRKEEKNRFKKKTKVSVKKQFSK. Residues 457–469 show a composition bias toward basic and acidic residues; sequence RIEKREGRKEEKN. The span at 470-485 shows a compositional bias: basic residues; the sequence is RFKKKTKVSVKKQFSK.

Belongs to the TRAFAC class TrmE-Era-EngA-EngB-Septin-like GTPase superfamily. EngA (Der) GTPase family. As to quaternary structure, associates with the 50S ribosomal subunit.

GTPase that plays an essential role in the late steps of ribosome biogenesis. The chain is GTPase Der from Neisseria meningitidis serogroup A / serotype 4A (strain DSM 15465 / Z2491).